A 954-amino-acid chain; its full sequence is Mycolic acid-containing lipids exporter MmpL11 (954 aa).

A run of 12 helical transmembrane segments spans residues 11-31 (FRWA…YLAL), 188-208 (IVLI…LPLV), 214-234 (VVVT…SVFV), 235-255 (TSTV…FILM), 279-299 (GLAV…IYLI), 312-334 (ILAV…ATFG), 373-393 (AIAA…MVLG), 529-549 (TQPL…LVSI), 559-579 (VLMT…VFQW), 597-617 (IPPL…IFLL), 648-668 (AALI…PLVA), and 670-690 (LGVA…LVLV).

It localises to the cell inner membrane. Its function is as follows. Contributes to cell wall biosynthesis and biofilm formation. Transports the mycolic acid-containing lipids monomeromycolyl diacylglycerol (MMDAG) and mycolate ester wax (WE) to the bacterial surface. The protein is Mycolic acid-containing lipids exporter MmpL11 of Mycolicibacterium smegmatis (strain ATCC 700084 / mc(2)155) (Mycobacterium smegmatis).